Reading from the N-terminus, the 287-residue chain is Phosphatidylserine decarboxylase proenzyme (287 aa).

Catalysis depends on charge relay system; for autoendoproteolytic cleavage activity residues D89, H146, and S252. S252 serves as the catalytic Schiff-base intermediate with substrate; via pyruvic acid; for decarboxylase activity. At S252 the chain carries Pyruvic acid (Ser); by autocatalysis.

This sequence belongs to the phosphatidylserine decarboxylase family. PSD-B subfamily. Prokaryotic type I sub-subfamily. As to quaternary structure, heterodimer of a large membrane-associated beta subunit and a small pyruvoyl-containing alpha subunit. Pyruvate is required as a cofactor. Is synthesized initially as an inactive proenzyme. Formation of the active enzyme involves a self-maturation process in which the active site pyruvoyl group is generated from an internal serine residue via an autocatalytic post-translational modification. Two non-identical subunits are generated from the proenzyme in this reaction, and the pyruvate is formed at the N-terminus of the alpha chain, which is derived from the carboxyl end of the proenzyme. The autoendoproteolytic cleavage occurs by a canonical serine protease mechanism, in which the side chain hydroxyl group of the serine supplies its oxygen atom to form the C-terminus of the beta chain, while the remainder of the serine residue undergoes an oxidative deamination to produce ammonia and the pyruvoyl prosthetic group on the alpha chain. During this reaction, the Ser that is part of the protease active site of the proenzyme becomes the pyruvoyl prosthetic group, which constitutes an essential element of the active site of the mature decarboxylase.

Its subcellular location is the cell membrane. It catalyses the reaction a 1,2-diacyl-sn-glycero-3-phospho-L-serine + H(+) = a 1,2-diacyl-sn-glycero-3-phosphoethanolamine + CO2. It participates in phospholipid metabolism; phosphatidylethanolamine biosynthesis; phosphatidylethanolamine from CDP-diacylglycerol: step 2/2. In terms of biological role, catalyzes the formation of phosphatidylethanolamine (PtdEtn) from phosphatidylserine (PtdSer). This is Phosphatidylserine decarboxylase proenzyme from Shewanella pealeana (strain ATCC 700345 / ANG-SQ1).